The chain runs to 671 residues: Gametogenetin-binding protein 2-like (671 aa).

Disordered regions lie at residues 372–489 and 532–562; these read REQK…ARVQ and VRDS…SEVS. Over residues 373-384 the composition is skewed to basic residues; the sequence is EQKKLKKKKKKD. Basic and acidic residues predominate over residues 385–395; that stretch reads EKKNLLHRQCD. Positions 396 to 420 are enriched in acidic residues; it reads DTEANESDEEEEELRNEELDLEEES. Positions 455–472 are enriched in basic residues; that stretch reads TKSKPKKQSKKKKQKKAA. Polar residues-rich tracts occupy residues 476-486 and 546-557; these read MGNQKQMQATA and GSRTSSAISSPE.

In Drosophila melanogaster (Fruit fly), this protein is Gametogenetin-binding protein 2-like.